The sequence spans 376 residues: Probable inactive protein kinase At3g63330 (376 aa).

The Protein kinase domain maps to 1–370 (MVERGPTVYL…VDEALQHPYF (370 aa)).

This sequence belongs to the protein kinase superfamily. Ser/Thr protein kinase family.

The polypeptide is Probable inactive protein kinase At3g63330 (Arabidopsis thaliana (Mouse-ear cress)).